Reading from the N-terminus, the 501-residue chain is NAD(P)H-quinone oxidoreductase chain 4, chloroplastic (501 aa).

The next 14 membrane-spanning stretches (helical) occupy residues 4 to 24, 35 to 55, 84 to 104, 111 to 129, 134 to 154, 168 to 188, 209 to 229, 243 to 263, 273 to 293, 306 to 326, 331 to 351, 387 to 407, 417 to 437, and 463 to 483; these read FPWLTIIVVLPISAGSLILFL, YTICICILELLITTYAFCYHF, GLSIGPILLTGFITTLATLAA, SRLLHLLMLAMYSGQIGSF, LLLFFIMWELELIPVYLLLSM, FILYTAGGSIFLLMGVLGMDL, ALEILFYFGFIIAFAVKSPII, HYSTCMLLAGILLKMGAYGLI, AHSIFSPWLVIVGTMQIIYAA, IAYSSVSHMGFIIIGIGSITD, GAILQIISHGFIGAALFFLAG, LALPGMSGFVAELIVFFGIIT, ILITFVMAIGMILTPIYSLSM, and LFVSISIFLPVIGIGIYPDFV.

It belongs to the complex I subunit 4 family.

It localises to the plastid. Its subcellular location is the chloroplast thylakoid membrane. The catalysed reaction is a plastoquinone + NADH + (n+1) H(+)(in) = a plastoquinol + NAD(+) + n H(+)(out). It catalyses the reaction a plastoquinone + NADPH + (n+1) H(+)(in) = a plastoquinol + NADP(+) + n H(+)(out). The polypeptide is NAD(P)H-quinone oxidoreductase chain 4, chloroplastic (Buxus microphylla (Littleleaf boxwood)).